Consider the following 186-residue polypeptide: Quinone reductase (186 aa).

Residues 13–20 (SLRKESYN), 80–83 (EYNR), and serine 116 contribute to the FMN site.

The protein belongs to the SsuE family. In terms of assembly, homotetramer. Dimer of dimers. The tetrameric configuration has a central role in chromate reductase activity. FMN serves as cofactor.

It catalyses the reaction a quinone + NADH + H(+) = a quinol + NAD(+). The catalysed reaction is a quinone + NADPH + H(+) = a quinol + NADP(+). It carries out the reaction Cr(6+) + 2 NADH + O2 = Cr(3+) + superoxide + 2 NAD(+) + 2 H(+). The enzyme catalyses Cr(6+) + 2 NADPH + O2 = Cr(3+) + superoxide + 2 NADP(+) + 2 H(+). Its activity is regulated as follows. May be inhibited by divalent cations. Catalyzes the reduction of quinones. Acts by simultaneous two-electron transfer, avoiding formation of highly reactive semiquinone intermediates and producing quinols that promote tolerance of H(2)O(2). Quinone reduction is probably the primary biological role of ChrR. Can also reduce toxic chromate to insoluble and less toxic Cr(3+). Catalyzes the transfer of three electrons to Cr(6+) producing Cr(3+) and one electron to molecular oxygen. This reaction produces transiently a minimal amount of the toxic Cr(5+) species and reactive oxygen species (ROS). Chromate reduction protects the cell against chromate toxicity, but is likely a secondary activity. Can also reduce potassium ferricyanide and 2,6-dichloroindophenol. During chromate reduction, displays an eightfold preference for NADH over NADPH. This chain is Quinone reductase, found in Pseudomonas putida (strain ATCC 47054 / DSM 6125 / CFBP 8728 / NCIMB 11950 / KT2440).